A 92-amino-acid chain; its full sequence is UPF0473 protein OB2006 (92 aa).

Belongs to the UPF0473 family.

The sequence is that of UPF0473 protein OB2006 from Oceanobacillus iheyensis (strain DSM 14371 / CIP 107618 / JCM 11309 / KCTC 3954 / HTE831).